The following is a 236-amino-acid chain: Small ribosomal subunit protein uS2c (236 aa).

The protein belongs to the universal ribosomal protein uS2 family.

The protein localises to the plastid. The protein resides in the chloroplast. The protein is Small ribosomal subunit protein uS2c (rps2) of Panax ginseng (Korean ginseng).